A 151-amino-acid polypeptide reads, in one-letter code: Transcription factor ATOH7 (151 aa).

The 53-residue stretch at 39–91 (KRRLAANARERRRMQGLNTAFDRLRKVVPQWGQDKKLSKYETLQMALSYIMAL) folds into the bHLH domain.

Its subcellular location is the nucleus. The protein resides in the perikaryon. The protein localises to the cell projection. It localises to the axon. Transcription factor that binds to DNA at the consensus sequence 5'-CAG[GC]TG-3'. Positively regulates the determination of retinal ganglion cell fate and formation of the optic nerve and retino-hypothalamic tract. Required for retinal circadian rhythm photoentrainment. Plays a role in brainstem auditory signaling and binaural processing. During retinal neurogenesis, activates its own transcription, as well as the transcription of CHRNB3 and BRN3. This chain is Transcription factor ATOH7, found in Gallus gallus (Chicken).